The chain runs to 336 residues: Apyrase (336 aa).

The signal sequence occupies residues 1–21 (MFLKFCVVAFAICLSINLSEG). N209 carries N-linked (GlcNAc...) asparagine glycosylation.

This sequence belongs to the apyrase family. Requires Ca(2+) as cofactor. In terms of tissue distribution, salivary gland (at protein level).

The protein localises to the secreted. It carries out the reaction a ribonucleoside 5'-triphosphate + 2 H2O = a ribonucleoside 5'-phosphate + 2 phosphate + 2 H(+). Its function is as follows. Facilitates hematophagy by inhibiting ADP- and collagen-dependent platelet aggregation in the host. Cleaves adenosine triphosphate (ATP) and adenosine diphosphate (ADP) to adenosine monophosphate (AMP) and inorganic phosphate in calcium-dependent manner. The sequence is that of Apyrase from Phlebotomus duboscqi (Sandfly).